The primary structure comprises 132 residues: Small ribosomal subunit protein uS8 (132 aa).

Belongs to the universal ribosomal protein uS8 family. As to quaternary structure, part of the 30S ribosomal subunit. Contacts proteins S5 and S12.

In terms of biological role, one of the primary rRNA binding proteins, it binds directly to 16S rRNA central domain where it helps coordinate assembly of the platform of the 30S subunit. In Thermoanaerobacter pseudethanolicus (strain ATCC 33223 / 39E) (Clostridium thermohydrosulfuricum), this protein is Small ribosomal subunit protein uS8.